The following is a 309-amino-acid chain: ATP synthase gamma chain (309 aa).

Belongs to the ATPase gamma chain family. In terms of assembly, F-type ATPases have 2 components, CF(1) - the catalytic core - and CF(0) - the membrane proton channel. CF(1) has five subunits: alpha(3), beta(3), gamma(1), delta(1), epsilon(1). CF(0) has three main subunits: a, b and c.

It is found in the cell membrane. Functionally, produces ATP from ADP in the presence of a proton gradient across the membrane. The gamma chain is believed to be important in regulating ATPase activity and the flow of protons through the CF(0) complex. This chain is ATP synthase gamma chain, found in Mycobacterium sp. (strain JLS).